The chain runs to 137 residues: ATP synthase epsilon chain (137 aa).

Belongs to the ATPase epsilon chain family. In terms of assembly, F-type ATPases have 2 components, CF(1) - the catalytic core - and CF(0) - the membrane proton channel. CF(1) has five subunits: alpha(3), beta(3), gamma(1), delta(1), epsilon(1). CF(0) has three main subunits: a, b and c.

It is found in the cell membrane. Its function is as follows. Produces ATP from ADP in the presence of a proton gradient across the membrane. This Desulforudis audaxviator (strain MP104C) protein is ATP synthase epsilon chain.